The sequence spans 38 residues: Large ribosomal subunit protein bL36 (38 aa).

The protein belongs to the bacterial ribosomal protein bL36 family.

This is Large ribosomal subunit protein bL36 from Pseudomonas entomophila (strain L48).